Consider the following 62-residue polypeptide: Large ribosomal subunit protein bL28 (62 aa).

The protein belongs to the bacterial ribosomal protein bL28 family.

The chain is Large ribosomal subunit protein bL28 from Aliarcobacter butzleri (strain RM4018) (Arcobacter butzleri).